A 290-amino-acid polypeptide reads, in one-letter code: Zinc finger protein-like 1 homolog (290 aa).

A B box-type; degenerate zinc finger spans residues 1-43; that stretch reads MGLCKCPKRQVTTQFCFEHRVNVCENCMVVNHTKCTVQSYIQW. Residues 53–101 form an RING-type; atypical zinc finger; the sequence is CPLCGSPLDNEDCVRLICYHVFHWKCLNAKQQSLPANTAPGGHTCPTCS. Polar residues predominate over residues 156–168; sequence NGNTFASSMSQTR. The interval 156-175 is disordered; the sequence is NGNTFASSMSQTRSNERPES. The helical transmembrane segment at 249-269 threads the bilayer; it reads WFLVLGGCIGFVCIIYVLATL.

The protein belongs to the ZFPL1 family.

The protein resides in the membrane. In Aedes aegypti (Yellowfever mosquito), this protein is Zinc finger protein-like 1 homolog.